Reading from the N-terminus, the 395-residue chain is E3 ubiquitin-protein ligase NHLRC1 (395 aa).

An RING-type zinc finger spans residues 26–72 (CKVCFEKFGHRQQRRPRNLSCGHVVCLACVAALAHPRTLALECPFCR). NHL repeat units follow at residues 113–157 (ALTC…FDSG), 161–204 (AHQF…FDFF), 205–245 (GQIK…LDVD), 248–300 (EGVL…FSSS), 301–349 (MQLV…LGKP), and 350–393 (EEFP…YKVD).

Interacts with AGL. Interacts (via the NHL repeats) with EPM2A/laforin. Forms a complex with EPM2A/laforin and HSP70. Interacts with PRDM8. In terms of tissue distribution, expressed in brain, cerebellum, spinal cord, medulla, heart, liver, skeletal muscle and pancreas.

The protein localises to the endoplasmic reticulum. It localises to the nucleus. The enzyme catalyses S-ubiquitinyl-[E2 ubiquitin-conjugating enzyme]-L-cysteine + [acceptor protein]-L-lysine = [E2 ubiquitin-conjugating enzyme]-L-cysteine + N(6)-ubiquitinyl-[acceptor protein]-L-lysine.. Its pathway is protein modification; protein ubiquitination. In terms of biological role, E3 ubiquitin-protein ligase. Together with the phosphatase EPM2A/laforin, appears to be involved in the clearance of toxic polyglucosan and protein aggregates via multiple pathways. In complex with EPM2A/laforin and HSP70, suppresses the cellular toxicity of misfolded proteins by promoting their degradation through the ubiquitin-proteasome system (UPS). Ubiquitinates the glycogen-targeting protein phosphatase subunits PPP1R3C/PTG and PPP1R3D in a laforin-dependent manner and targets them for proteasome-dependent degradation, thus decreasing glycogen accumulation. Polyubiquitinates EPM2A/laforin and ubiquitinates AGL and targets them for proteasome-dependent degradation. Also promotes proteasome-independent protein degradation through the macroautophagy pathway. This is E3 ubiquitin-protein ligase NHLRC1 (NHLRC1) from Homo sapiens (Human).